The sequence spans 326 residues: MGFTTRVKSEASEKKPFNFALFWDKYGTFFILAIIVAIFGSLSPEYFLTTNNITQIFVQSSVTVLIGMGEFFAILVAGIDLSVGAILALSGMVTAKLMLAGVDPFLAAMIGGVLVGGALGAINGCLVNWTGLHPFIITLGTNAIFRGITLVISDANSVYGFSFDFVNFFAASVIGIPVPVIFSLIVALILWFLTTRMRLGRNIYALGGNKNSAFYSGIDVKFHILVVFIISGVCAGLAGVVSTARLGAAEPLAGMGFETYAIASAIIGGTSFFGGKGRIFSVVIGGLIIGTINNGLNILQVQTYYQLVVMGGLIIAAVALDRLISK.

Over 1–18 (MGFTTRVKSEASEKKPFN) the chain is Cytoplasmic. Residues 19–39 (FALFWDKYGTFFILAIIVAIF) form a helical membrane-spanning segment. The Periplasmic portion of the chain corresponds to 40–70 (GSLSPEYFLTTNNITQIFVQSSVTVLIGMGE). Residues 71–91 (FFAILVAGIDLSVGAILALSG) traverse the membrane as a helical segment. Residues 92–101 (MVTAKLMLAG) are Cytoplasmic-facing. The helical transmembrane segment at 102-122 (VDPFLAAMIGGVLVGGALGAI) threads the bilayer. At 123-124 (NG) the chain is on the periplasmic side. A helical membrane pass occupies residues 125 to 145 (CLVNWTGLHPFIITLGTNAIF). Residues 146–149 (RGIT) lie on the Cytoplasmic side of the membrane. A helical membrane pass occupies residues 150 to 170 (LVISDANSVYGFSFDFVNFFA). The Periplasmic segment spans residues 171 to 172 (AS). Residues 173–193 (VIGIPVPVIFSLIVALILWFL) traverse the membrane as a helical segment. The Cytoplasmic portion of the chain corresponds to 194–221 (TTRMRLGRNIYALGGNKNSAFYSGIDVK). Residues 222–242 (FHILVVFIISGVCAGLAGVVS) traverse the membrane as a helical segment. Residues 243-252 (TARLGAAEPL) are Periplasmic-facing. A helical membrane pass occupies residues 253–273 (AGMGFETYAIASAIIGGTSFF). Residues 274–278 (GGKGR) are Cytoplasmic-facing. The next 2 helical transmembrane spans lie at 279–299 (IFSV…LNIL) and 300–320 (QVQT…AVAL). The Cytoplasmic portion of the chain corresponds to 321–326 (DRLISK).

Belongs to the binding-protein-dependent transport system permease family. AraH/RbsC subfamily.

The protein localises to the cell inner membrane. Part of the binding-protein-dependent transport system AlsBAC for D-allose; probably responsible for the translocation of the substrate across the membrane. The sequence is that of D-allose transport system permease protein AlsC (alsC) from Escherichia coli (strain K12).